The chain runs to 313 residues: tRNA-cytidine(32) 2-sulfurtransferase (313 aa).

The short motif at 50-55 is the PP-loop motif element; that stretch reads SGGKDS. The [4Fe-4S] cluster site is built by C125, C128, and C216.

It belongs to the TtcA family. In terms of assembly, homodimer. It depends on Mg(2+) as a cofactor. Requires [4Fe-4S] cluster as cofactor.

The protein resides in the cytoplasm. The enzyme catalyses cytidine(32) in tRNA + S-sulfanyl-L-cysteinyl-[cysteine desulfurase] + AH2 + ATP = 2-thiocytidine(32) in tRNA + L-cysteinyl-[cysteine desulfurase] + A + AMP + diphosphate + H(+). It participates in tRNA modification. Functionally, catalyzes the ATP-dependent 2-thiolation of cytidine in position 32 of tRNA, to form 2-thiocytidine (s(2)C32). The sulfur atoms are provided by the cysteine/cysteine desulfurase (IscS) system. This chain is tRNA-cytidine(32) 2-sulfurtransferase, found in Haemophilus influenzae (strain ATCC 51907 / DSM 11121 / KW20 / Rd).